We begin with the raw amino-acid sequence, 1072 residues long: E3 ubiquitin-protein ligase RNF31 (1072 aa).

A polyubiquitin-binding region spans residues 1-485; it reads MPGEEEERAF…PEKQRQDKMR (485 aa). In terms of domain architecture, PUB spans 71–142; that stretch reads TLSTALNILE…SFPEGQEEPD (72 aa). Residues 263-290 are disordered; sequence QGTHLSPSLPASAQPRPQSTSLLALGDS. The span at 265-280 shows a compositional bias: polar residues; the sequence is THLSPSLPASAQPRPQ. Residues 281 to 290 are compositionally biased toward low complexity; that stretch reads STSLLALGDS. RanBP2-type zinc fingers lie at residues 299–329 and 350–379; these read SAHL…PRGC and ARGR…PRLA. Residue Ser-383 is modified to Phosphoserine. The segment at 409–438 adopts a RanBP2-type 3 zinc-finger fold; the sequence is QSQVWYCIHCTFCNSSPGWVCVMCNRTSSP. The interval 443–484 is disordered; it reads HAPRPYASSLEKGPPKPGPPRRLSAPLPSSCGDPEKQRQDKM. Residues 463–472 are compositionally biased toward low complexity; that stretch reads RRLSAPLPSS. Ser-466 is subject to Phosphoserine. The span at 475 to 484 shows a compositional bias: basic and acidic residues; sequence DPEKQRQDKM. The interval 563–616 is interaction with RBCK1; sequence GNLDEAVEECVRTRRRKVQELQSLGFGPEEGSLQALFQHGGDVSRALTELQRQR. Residues 564–615 form the UBA domain; sequence NLDEAVEECVRTRRRKVQELQSLGFGPEEGSLQALFQHGGDVSRALTELQRQ. The segment at 695-929 is TRIAD supradomain; sequence LAQECAVCGW…KSLHGHHPRD (235 aa). Residues Cys-699, Cys-702, Cys-717, Cys-719, Cys-722, and Cys-725 each coordinate Zn(2+). The RING-type 1 zinc-finger motif lies at 699 to 749; that stretch reads CAVCGWALPHNRMQALTSCECTICPDCFRQHFTIALKEKHITDMVCPACGR. Lys-735 is covalently cross-linked ((Microbial infection) Glycyl lysine isopeptide (Lys-Gly) (interchain with G-Cter in ubiquitin)). 2 residues coordinate Zn(2+): Cys-744 and Cys-747. The IBR-type zinc finger occupies 779–841; that stretch reads ALFHKKLTEG…WEEQHRGRSC (63 aa). Residue Lys-783 forms a (Microbial infection) Glycyl lysine isopeptide (Lys-Gly) (interchain with G-Cter in ubiquitin) linkage. Residues Cys-799, Cys-802, Cys-817, Cys-820, Cys-825, Cys-828, His-836, Cys-841, Cys-871, and Cys-874 each coordinate Zn(2+). The RING-type 2; atypical zinc-finger motif lies at 871-901; that stretch reads CPKCKFSYALARGGCMHFHCTQCRHQFCSGC. A (Microbial infection) Glycyl lysine isopeptide (Lys-Gly) (interchain with G-Cter in ubiquitin) cross-link involves residue Lys-875. The active site involves Cys-885. Zn(2+)-binding residues include Cys-890, Cys-893, Cys-898, Cys-901, Cys-916, and His-925. Positions 910 to 1072 are LDD domain; sequence KCPEPNCRVK…LGQSIPRRRK (163 aa).

Belongs to the RBR family. In terms of assembly, component of the LUBAC complex (linear ubiquitin chain assembly complex) which consists of SHARPIN, RBCK1 and RNF31. LUBAC has a MW of approximately 600 kDa suggesting a heteromultimeric assembly of its subunits. Associates with the TNF-R1 signaling complex (TNF-RSC) in a stimulation-dependent manner. Interacts (via the PUB domain) with OTULIN (via the PIM motif); the interaction is direct. Interacts (via the PUB domain) with VCP (via the PIM motif). Interacts (via the PUB domain) with SPATA2 (via the PIM motif); interaction is direct and bridges RNF31 and CYLD. Interacts with CYLD; the interaction is indirect and is mediated via SPATA2. Interacts with MUSK. Interacts with CARD11, promoting linear ubiquitination of BCL10. As to quaternary structure, (Microbial infection) Interacts with S.flexneri E3 ubiquitin-protein ligases IpaH1.4 and IpaH2.5, leading to its ubiquitination. Autoubiquitinated. Interaction with OTULIN is required to suppress formation of 'Met-1'-linked polyubiquitin chains and prevent subsequent inactivation of the LUBAC complex. Post-translationally, cleaved by caspase during apoptosis. In terms of processing, (Microbial infection) Ubiquitinated by S.flexneri E3 ubiquitin-protein ligases IpaH1.4 and IpaH2.5, leading to its degradation by the proteasome, thereby preventing formation of the bacterial ubiquitin coat and activation of innate immunity. Expressed in both normal and transformed breast epithelial cell lines.

It localises to the cytoplasm. The enzyme catalyses [E2 ubiquitin-conjugating enzyme]-S-ubiquitinyl-L-cysteine + [acceptor protein]-L-lysine = [E2 ubiquitin-conjugating enzyme]-L-cysteine + [acceptor protein]-N(6)-ubiquitinyl-L-lysine.. It functions in the pathway protein modification; protein ubiquitination. Its function is as follows. E3 ubiquitin-protein ligase component of the LUBAC complex which conjugates linear ('Met-1'-linked) polyubiquitin chains to substrates and plays a key role in NF-kappa-B activation and regulation of inflammation. LUBAC conjugates linear polyubiquitin to IKBKG and RIPK1 and is involved in activation of the canonical NF-kappa-B and the JNK signaling pathways. Linear ubiquitination mediated by the LUBAC complex interferes with TNF-induced cell death and thereby prevents inflammation. LUBAC is recruited to the TNF-R1 signaling complex (TNF-RSC) following polyubiquitination of TNF-RSC components by BIRC2 and/or BIRC3 and to conjugate linear polyubiquitin to IKBKG and possibly other components contributing to the stability of the complex. The LUBAC complex is also involved in innate immunity by conjugating linear polyubiquitin chains at the surface of bacteria invading the cytosol to form the ubiquitin coat surrounding bacteria. LUBAC is not able to initiate formation of the bacterial ubiquitin coat, and can only promote formation of linear polyubiquitins on pre-existing ubiquitin. Recruited to the surface of bacteria by RNF213, which initiates the bacterial ubiquitin coat. The bacterial ubiquitin coat acts as an 'eat-me' signal for xenophagy and promotes NF-kappa-B activation. Together with OTULIN, the LUBAC complex regulates the canonical Wnt signaling during angiogenesis. RNF31 is required for linear ubiquitination of BCL10, thereby promoting TCR-induced NF-kappa-B activation. Binds polyubiquitin of different linkage types. This is E3 ubiquitin-protein ligase RNF31 from Homo sapiens (Human).